Reading from the N-terminus, the 119-residue chain is Large ribosomal subunit protein uL18 (119 aa).

Belongs to the universal ribosomal protein uL18 family. Part of the 50S ribosomal subunit; part of the 5S rRNA/L5/L18/L25 subcomplex. Contacts the 5S and 23S rRNAs.

This is one of the proteins that bind and probably mediate the attachment of the 5S RNA into the large ribosomal subunit, where it forms part of the central protuberance. The protein is Large ribosomal subunit protein uL18 of Anaeromyxobacter sp. (strain Fw109-5).